Consider the following 1275-residue polypeptide: O-antigen biosynthesis protein RfbC (1275 aa).

In terms of biological role, involved in O-antigen biosynthesis. The polypeptide is O-antigen biosynthesis protein RfbC (rfbC) (Myxococcus xanthus).